The following is a 141-amino-acid chain: UPF0102 protein BRADO0179 (141 aa).

A disordered region spans residues methionine 1–glutamate 24. A compositionally biased stretch (low complexity) spans lysine 10–lysine 19.

This sequence belongs to the UPF0102 family.

This Bradyrhizobium sp. (strain ORS 278) protein is UPF0102 protein BRADO0179.